Here is a 125-residue protein sequence, read N- to C-terminus: Glycine cleavage system H protein (125 aa).

Residues 19 to 101 form the Lipoyl-binding domain; the sequence is VGTVGISDYA…EGAAWFFKLT (83 aa). N6-lipoyllysine is present on lysine 60.

It belongs to the GcvH family. As to quaternary structure, the glycine cleavage system is composed of four proteins: P, T, L and H. The cofactor is (R)-lipoate.

In terms of biological role, the glycine cleavage system catalyzes the degradation of glycine. The H protein shuttles the methylamine group of glycine from the P protein to the T protein. The chain is Glycine cleavage system H protein from Paramagnetospirillum magneticum (strain ATCC 700264 / AMB-1) (Magnetospirillum magneticum).